A 211-amino-acid chain; its full sequence is V-type ATP synthase subunit D (211 aa).

It belongs to the V-ATPase D subunit family.

Functionally, produces ATP from ADP in the presence of a proton gradient across the membrane. The protein is V-type ATP synthase subunit D of Enterococcus faecalis (strain ATCC 700802 / V583).